A 62-amino-acid chain; its full sequence is ATP synthase subunit J, mitochondrial (62 aa).

Residues 13–32 traverse the membrane as a helical segment; the sequence is IVKPLWPYAVGGVITFFLFA.

F-type ATP synthases have 2 components, the catalytic core F(1) and the membrane-embedded component F(0), linked together by a central stalk and a peripheral stalk. The central stalk, also called rotor shaft, is often seen as part of F(1). The peripheral stalk is seen as part of F(0). F(0) contains the membrane channel next to the rotor. F-type ATP synthases form dimers but each monomer functions independently in ATP generation. The dimer consists of 17 different polypeptides: ATP1 (subunit alpha, 3 molecules per monomer, part of F(1)), ATP2 (subunit beta, 3 copies per monomer, part of F(1)), ATP3 (subunit gamma, part of the central stalk), ATP4 (subunit b, part of the peripheral stalk), ATP5/OSCP (subunit 5/OSCP, part of the peripheral stalk), ATP6 (subunit a, part of the peripheral stalk), ATP7 (subunit d, part of the peripheral stalk), ATP8 (subunit 8, part of the peripheral stalk), OLI1 (subunit c, part of the rotor, 10 molecules per monomer), ATP14 (subunit h, part of the peripheral stalk), ATP15 (subunit epsilon, part of the central stalk), ATP16 (subunit delta, part of the central stalk), ATP17 (subunit f, part of the peripheral stalk), ATP18 (subunit i/j, part of the peripheral stalk), ATP19 (subunit k, dimer-specific, at interface between monomers), ATP20 (subunit g, at interface between monomers), TIM11 (subunit e, at interface between monomers).

It localises to the mitochondrion inner membrane. Its function is as follows. Mitochondrial membrane ATP synthase (F(1)F(0) ATP synthase or Complex V) produces ATP from ADP in the presence of a proton gradient across the membrane which is generated by electron transport complexes of the respiratory chain. F-type ATP synthases consist of two structural domains, F(1) - containing the extramembraneous catalytic core, and F(0) - containing the membrane proton channel, linked together by a central stalk and a peripheral stalk. During catalysis, ATP synthesis in the catalytic domain of F(1) is coupled via a rotary mechanism of the central stalk subunits to proton translocation. Part of the complex F(0) domain. Minor subunit located with subunit a/ATP6 in the membrane. The sequence is that of ATP synthase subunit J, mitochondrial from Yarrowia lipolytica (strain CLIB 122 / E 150) (Yeast).